Reading from the N-terminus, the 237-residue chain is Ribosomal RNA small subunit methyltransferase G (237 aa).

S-adenosyl-L-methionine is bound by residues Gly-78, Phe-83, 129–130 (AE), and Arg-148.

It belongs to the methyltransferase superfamily. RNA methyltransferase RsmG family.

The protein localises to the cytoplasm. Its function is as follows. Specifically methylates the N7 position of a guanine in 16S rRNA. This chain is Ribosomal RNA small subunit methyltransferase G, found in Streptococcus equi subsp. equi (strain 4047).